Consider the following 177-residue polypeptide: Putative acetyltransferase FG08082 (177 aa).

In terms of domain architecture, N-acetyltransferase spans 81-174; it reads EEWEQVGLVR…VSIAMVEGPG (94 aa).

Belongs to the acetyltransferase family.

It functions in the pathway mycotoxin biosynthesis. Its function is as follows. Putative acetyltransferase; part of the gene cluster that mediates the biosynthesis of butenolide, a mycotoxin that shows antibiotic activity but does not seem to play a major role in the spread of head blight in wheat. Butenolide is derived from glutamic acid via a 4-acetamido-2-butenoic acid intermediate. The predicted function of the NADH:flavin oxidoreductase FG08077, the cytochrome P450 monooxygenase FG08079, the decarboxylase FG08083, and the putative acetyltransferase FG08082 are consistent with this pathway, however, the respective activities of the butelonide biosynthesis cluster enzymes have still to be experimentally determined. In Gibberella zeae (strain ATCC MYA-4620 / CBS 123657 / FGSC 9075 / NRRL 31084 / PH-1) (Wheat head blight fungus), this protein is Putative acetyltransferase FG08082.